Reading from the N-terminus, the 162-residue chain is Phosphopantetheine adenylyltransferase (162 aa).

Thr-14 contacts substrate. Residues Thr-14–Phe-15 and His-22 contribute to the ATP site. The substrate site is built by Lys-46, Leu-78, and Arg-92. ATP contacts are provided by residues Gly-93–Arg-95, Glu-103, and His-128–Ser-134.

The protein belongs to the bacterial CoaD family. Homohexamer. Mg(2+) serves as cofactor.

Its subcellular location is the cytoplasm. The catalysed reaction is (R)-4'-phosphopantetheine + ATP + H(+) = 3'-dephospho-CoA + diphosphate. The protein operates within cofactor biosynthesis; coenzyme A biosynthesis; CoA from (R)-pantothenate: step 4/5. Functionally, reversibly transfers an adenylyl group from ATP to 4'-phosphopantetheine, yielding dephospho-CoA (dPCoA) and pyrophosphate. The protein is Phosphopantetheine adenylyltransferase of Xylella fastidiosa (strain 9a5c).